Reading from the N-terminus, the 552-residue chain is NADH-ubiquinone oxidoreductase chain 5 (552 aa).

Helical transmembrane passes span 11–31, 36–56, 68–88, 89–109, 121–141, 152–172, 196–216, 229–249, 256–274, 287–307, 322–342, 365–386, 406–426, 453–473, and 532–552; these read PVTI…PFGL, LAMT…AYAI, FYII…SDNY, LMMF…ISFW, SAIL…GLMI, IALV…LLLL, TPVS…YVLV, LLII…IAIV, VIAL…AIGI, HAFF…SFVA, LPFS…IPGL, ILYY…RVLY, SLGM…IGYS, AYIK…LVYV, and SRAV…LFFI.

The protein belongs to the complex I subunit 5 family.

The protein localises to the mitochondrion inner membrane. The enzyme catalyses a ubiquinone + NADH + 5 H(+)(in) = a ubiquinol + NAD(+) + 4 H(+)(out). Core subunit of the mitochondrial membrane respiratory chain NADH dehydrogenase (Complex I) that is believed to belong to the minimal assembly required for catalysis. Complex I functions in the transfer of electrons from NADH to the respiratory chain. The immediate electron acceptor for the enzyme is believed to be ubiquinone. The chain is NADH-ubiquinone oxidoreductase chain 5 (NAD5) from Candida albicans (strain SC5314 / ATCC MYA-2876) (Yeast).